Reading from the N-terminus, the 670-residue chain is MSSGKSARYNRFSGGPSNLPTPDVTTGTRMETTFGPAFSAVTTITKADGTSTYKQHCRTPSSSSTLAYSPRDEEDSMPPISTPRRSDSAISVRSLHSESSMSLRSTFSLPEEEEEPEPLVFAEQPSVKLCCQLCCSVFKDPVITTCGHTFCRRCALKSEKCPVDNVKLTVVVNNIAVAEQIGELFIHCRHGCRVAGSGKPPIFEVDPRGCPFTIKLSARKDHEGSCDYRPVRCPNNPSCPPLLRMNLEAHLKECEHIKCPHSKYGCTFIGNQDTYETHLETCRFEGLKEFLQQTDDRFHEMHVALAQKDQEIAFLRSMLGKLSEKIDQLEKSLELKFDVLDENQSKLSEDLMEFRRDASMLNDELSHINARLNMGILGSYDPQQIFKCKGTFVGHQGPVWCLCVYSMGDLLFSGSSDKTIKVWDTCTTYKCQKTLEGHDGIVLALCIQGCKLYSGSADCTIIVWDIQNLQKVNTIRAHDNPVCTLVSSHNVLFSGSLKAIKVWDIVGTELKLKKELTGLNHWVRALVAAQSYLYSGSYQTIKIWDIRTLDCIHVLQTSGGSVYSIAVTNHHIVCGTYENLIHVWDIESKEQVRTLTGHVGTVYALAVISTPDQTKVFSASYDRSLRVWSMDNMICTQTLLRHQGSVTALAVSRGRLFSGAVDSTVKVWTC.

Disordered stretches follow at residues 1–37 and 49–97; these read MSSG…FGPA and GTST…SLHS. Polar residues-rich tracts occupy residues 15-31 and 49-67; these read GPSN…TRME and GTST…STLA. S61, S88, and S91 each carry phosphoserine. An RING-type zinc finger spans residues 131-165; it reads CQLCCSVFKDPVITTCGHTFCRRCALKSEKCPVDN. The segment at 222–276 adopts a TRAF-type zinc-finger fold; that stretch reads HEGSCDYRPVRCPNNPSCPPLLRMNLEAHLKECEHIKCPHSKYGCTFIGNQDTYE. WD repeat units follow at residues 394–433, 437–474, 477–513, 515–554, 557–594, 597–638, and 641–669; these read GHQG…KCQK, GHDG…KVNT, AHDN…LKLK, ELTG…CIHV, TSGG…QVRT, GHVG…CTQT, and RHQG…KVWT.

It belongs to the WD repeat TRAF7 family. In terms of assembly, homodimer. Interacts with MAP3K3 and promotes the kinase activity of this enzyme. Phosphorylated by MAP3K3. Post-translationally, ubiquitinates itself upon phosphorylation. In terms of tissue distribution, ubiquitously expressed with high levels in skeletal muscle, heart, colon, spleen, kidney, liver and placenta.

The protein resides in the cytoplasmic vesicle. It localises to the cytoplasm. The protein localises to the nucleus. The enzyme catalyses S-ubiquitinyl-[E2 ubiquitin-conjugating enzyme]-L-cysteine + [acceptor protein]-L-lysine = [E2 ubiquitin-conjugating enzyme]-L-cysteine + N(6)-ubiquitinyl-[acceptor protein]-L-lysine.. It participates in protein modification; protein ubiquitination. Its function is as follows. E3 ubiquitin and SUMO-protein ligase that plays a role in different biological processes such as innate immunity, inflammation or apoptosis. Potentiates MAP3K3-mediated activation of JUN/AP1 and DDIT3 transcriptional regulators. Negatively regulates MYB transcriptional activity by sequestering it to the cytosol via SUMOylation. Plays a role in the phosphorylation of MAPK1 and/or MAPK3, probably via its interaction with MAP3K3. Negatively regulates RLR-mediated innate immunity by promoting 'Lys-48'-linked ubiquitination of TBK1 through its RING domain to inhibit the cellular antiviral response. Promotes 'Lys-29'-linked polyubiquitination of NEMO/IKBKG and RELA leading to targeting these two proteins to lysosomal degradative pathways, reducing the transcriptional activity of NF-kappa-B. The polypeptide is E3 ubiquitin-protein ligase TRAF7 (TRAF7) (Homo sapiens (Human)).